Here is a 53-residue protein sequence, read N- to C-terminus: Alpha-1-antiproteinase 1 (53 aa).

The tract at residues 1-28 is disordered; the sequence is EDLQGDAVPETSATKDDNEXPEMIPMSL.

It belongs to the serpin family. In terms of processing, N-glycosylated; contains biantennary glycans. As to expression, plasma.

Its subcellular location is the secreted. This Equus caballus (Horse) protein is Alpha-1-antiproteinase 1.